The sequence spans 126 residues: MRHISPEELIALHDANISRYGGLPGMSDPGRAEAIIGRVQARVAYEEITDLFEVSATYLVATARGHIFNDANKRTALNSALLFLRRNGVQVFDSPELADLTVGAATGEISVSSVADTLRRLYGSAE.

The Fido domain occupies 4 to 120 (ISPEELIALH…VSSVADTLRR (117 aa)).

Interacts with cognate antitoxin phd, the exact ratio of doc:phd varies from 1:1 to 1:3. Interaction with phd prevents kinase or phosphorylase activity on EF-Tu. Interacts with the 30S ribosomal subunit.

The catalysed reaction is L-seryl-[protein] + ATP = O-phospho-L-seryl-[protein] + ADP + H(+). It catalyses the reaction L-threonyl-[protein] + ATP = O-phospho-L-threonyl-[protein] + ADP + H(+). Its function is as follows. Toxic component of a type II toxin-antitoxin (TA) system. Phosphorylates EF-Tu on 'Thr-383' in vitro; can use ATP or GTP. Also dephosphorylates in the presence of ADP or GDP. Can only phosphorylate before the ternary aminoacyl-tRNA EF-Tu-GTP complex is formed; interaction with cognate antitoxin phd prevents phosphorylation and dephosphorylation of EF-Tu. Overexpression results in inhibition of growth in liquid cultures and a decrease in colony formation by inhibiting translation, stabilizing mRNA and polysomes; these effects are overcome by concomitant expression of antitoxin phd. Binds 70S ribosomes and the 30S ribosomal subunits, the binding site is the same as for the antibiotic hygromycin B. Bacteriophage P1 lysogenizes bacteria as a low-copy number plasmid; doc and phd proteins function in unison to stabilize plasmid number by inducing a lethal response to P1 plasmid prophage loss. Overexpression of doc can induce the mRNA interferase activity of host RelE in vivo. Functionally, antitoxin phd binds to its own promoter repressing its expression; toxin doc acts as a corepressor or derepressor depending on the ratio, repressing or inducing expression. This is Protein kinase doc (doc) from Escherichia phage P1 (Bacteriophage P1).